A 181-amino-acid polypeptide reads, in one-letter code: Large ribosomal subunit protein uL5 (181 aa).

The protein belongs to the universal ribosomal protein uL5 family. Part of the 50S ribosomal subunit; part of the 5S rRNA/L5/L18/L25 subcomplex. Contacts the 5S rRNA and the P site tRNA. Forms a bridge to the 30S subunit in the 70S ribosome.

Its function is as follows. This is one of the proteins that bind and probably mediate the attachment of the 5S RNA into the large ribosomal subunit, where it forms part of the central protuberance. In the 70S ribosome it contacts protein S13 of the 30S subunit (bridge B1b), connecting the 2 subunits; this bridge is implicated in subunit movement. Contacts the P site tRNA; the 5S rRNA and some of its associated proteins might help stabilize positioning of ribosome-bound tRNAs. The protein is Large ribosomal subunit protein uL5 of Clostridium kluyveri (strain NBRC 12016).